A 422-amino-acid chain; its full sequence is Phosphoribosylamine--glycine ligase (422 aa).

The ATP-grasp domain occupies 107-312; that stretch reads KEVMAAAGVR…LGQLLYAAGT (206 aa). 138–193 serves as a coordination point for ATP; it reads PPVGDLSWVVKDDRLAAGKGVVVTSDRDVARTHAAGLLEAGHPVLLESYLDGPEVS. Mg(2+)-binding residues include Glu282 and Asn284.

The protein belongs to the GARS family. The cofactor is Mg(2+). Mn(2+) is required as a cofactor.

It catalyses the reaction 5-phospho-beta-D-ribosylamine + glycine + ATP = N(1)-(5-phospho-beta-D-ribosyl)glycinamide + ADP + phosphate + H(+). It functions in the pathway purine metabolism; IMP biosynthesis via de novo pathway; N(1)-(5-phospho-D-ribosyl)glycinamide from 5-phospho-alpha-D-ribose 1-diphosphate: step 2/2. In Mycobacterium leprae (strain TN), this protein is Phosphoribosylamine--glycine ligase.